A 639-amino-acid chain; its full sequence is Sodium-dependent phosphate transport protein 2A (639 aa).

At 1 to 103 (MISYGENLGG…LRRAGVTLLK (103 aa)) the chain is on the cytoplasmic side. Ser-14 and Ser-34 each carry phosphoserine. The chain crosses the membrane as a helical span at residues 104–125 (VPLMLSFLYLFVCSLDVLSSAF). Residues 126–145 (QLAGGKVAGDIFKDNAILSN) lie on the Extracellular side of the membrane. Residues 146 to 163 (PVAGLVVGILVTVLVQSS) form a helical membrane-spanning segment. The Cytoplasmic portion of the chain corresponds to 164-165 (ST). The helical transmembrane segment at 166–185 (STSIVVSMVSSGLLEVSSAI) threads the bilayer. At 186–347 (PIIMGSNIGT…HIFVDTGLPD (162 aa)) the chain is on the extracellular side. 2 disulfides stabilise this stretch: Cys-225–Cys-522 and Cys-306–Cys-336. N-linked (GlcNAc...) asparagine glycans are attached at residues Asn-298, Asn-323, and Asn-330. A helical transmembrane segment spans residues 348 to 370 (LAVGLILLAGSLALLCTCLILLV). At 371-412 (KMLNSLLKGQVAKVIQKVINTDFPTPFTWATGYFAMVVGASM) the chain is on the cytoplasmic side. A helical membrane pass occupies residues 413-436 (TFVVQSSSVFTSAITPLIGLGVIS). Residues 437–466 (IERAYPLTLGSNIGTTTTAILAALASPREK) are Extracellular-facing. The helical transmembrane segment at 467–487 (LSSAFQIALCHFFFNISGILL) threads the bilayer. The Cytoplasmic segment spans residues 488–513 (WYPVPCTRLPIRMAKALGKRTAKYRW). Thr-508 is modified (phosphothreonine; by PKC). A helical membrane pass occupies residues 514–534 (FAVLYLLLCFLLLPSMVFGLS). The Extracellular segment spans residues 535 to 539 (MAGWR). The helical transmembrane segment at 540 to 561 (AMVGVGAPFGALLAFVVLVSAL) threads the bilayer. The Cytoplasmic segment spans residues 562–639 (QHRSPGCLPK…MPHHHDATRL (78 aa)). At Ser-607 the chain carries Phosphoserine. Thr-623 carries the post-translational modification Phosphothreonine. A Phosphoserine modification is found at Ser-625.

The protein belongs to the SLC34A transporter family. In terms of assembly, interacts via its C-terminal region with NHERF4. Interacts with NHERF1. Interacts with TMEM174; regulates SLC34A1 internalization by PTH and FGF23.

It is found in the apical cell membrane. Its subcellular location is the cell membrane. The enzyme catalyses 3 Na(+)(out) + phosphate(out) = 3 Na(+)(in) + phosphate(in). Its function is as follows. Involved in actively transporting phosphate into cells via Na(+) cotransport in the renal brush border membrane. The cotransport has a Na(+):Pi stoichiometry of 3:1 and is electrogenic. This Ovis aries (Sheep) protein is Sodium-dependent phosphate transport protein 2A.